Reading from the N-terminus, the 272-residue chain is 2-dehydro-3-deoxyphosphooctonate aldolase (272 aa).

Belongs to the KdsA family.

It localises to the cytoplasm. The enzyme catalyses D-arabinose 5-phosphate + phosphoenolpyruvate + H2O = 3-deoxy-alpha-D-manno-2-octulosonate-8-phosphate + phosphate. It participates in carbohydrate biosynthesis; 3-deoxy-D-manno-octulosonate biosynthesis; 3-deoxy-D-manno-octulosonate from D-ribulose 5-phosphate: step 2/3. Its pathway is bacterial outer membrane biogenesis; lipopolysaccharide biosynthesis. This chain is 2-dehydro-3-deoxyphosphooctonate aldolase, found in Geobacter sulfurreducens (strain ATCC 51573 / DSM 12127 / PCA).